Here is a 379-residue protein sequence, read N- to C-terminus: UDP-4-amino-4-deoxy-L-arabinose--oxoglutarate aminotransferase (379 aa).

K182 carries the N6-(pyridoxal phosphate)lysine modification.

The protein belongs to the DegT/DnrJ/EryC1 family. ArnB subfamily. As to quaternary structure, homodimer. Pyridoxal 5'-phosphate is required as a cofactor.

It carries out the reaction UDP-4-amino-4-deoxy-beta-L-arabinose + 2-oxoglutarate = UDP-beta-L-threo-pentopyranos-4-ulose + L-glutamate. Its pathway is nucleotide-sugar biosynthesis; UDP-4-deoxy-4-formamido-beta-L-arabinose biosynthesis; UDP-4-deoxy-4-formamido-beta-L-arabinose from UDP-alpha-D-glucuronate: step 2/3. The protein operates within bacterial outer membrane biogenesis; lipopolysaccharide biosynthesis. Functionally, catalyzes the conversion of UDP-4-keto-arabinose (UDP-Ara4O) to UDP-4-amino-4-deoxy-L-arabinose (UDP-L-Ara4N). The modified arabinose is attached to lipid A and is required for resistance to polymyxin and cationic antimicrobial peptides. The chain is UDP-4-amino-4-deoxy-L-arabinose--oxoglutarate aminotransferase from Erwinia tasmaniensis (strain DSM 17950 / CFBP 7177 / CIP 109463 / NCPPB 4357 / Et1/99).